The primary structure comprises 409 residues: Tryptophan synthase beta chain (409 aa).

Position 95 is an N6-(pyridoxal phosphate)lysine (K95).

The protein belongs to the TrpB family. As to quaternary structure, tetramer of two alpha and two beta chains. The cofactor is pyridoxal 5'-phosphate.

It carries out the reaction (1S,2R)-1-C-(indol-3-yl)glycerol 3-phosphate + L-serine = D-glyceraldehyde 3-phosphate + L-tryptophan + H2O. The protein operates within amino-acid biosynthesis; L-tryptophan biosynthesis; L-tryptophan from chorismate: step 5/5. In terms of biological role, the beta subunit is responsible for the synthesis of L-tryptophan from indole and L-serine. The polypeptide is Tryptophan synthase beta chain (Pseudomonas syringae pv. tomato (strain ATCC BAA-871 / DC3000)).